A 552-amino-acid chain; its full sequence is WAP, Kazal, immunoglobulin, Kunitz and NTR domain-containing protein 1 (552 aa).

Residues 1–25 form the signal peptide; it reads MPAPQPFLPLLFVFVLIHLTSETNL. A WAP domain is found at 29-82; sequence PGSHPGMCPNELSPHLWVDAQSTCERECTGDQDCAASEKCCTNVCGLQSCVAAR. 17 cysteine pairs are disulfide-bonded: Cys-36–Cys-69, Cys-52–Cys-73, Cys-56–Cys-68, Cys-62–Cys-78, Cys-120–Cys-150, Cys-124–Cys-143, Cys-132–Cys-161, Cys-211–Cys-267, Cys-303–Cys-355, Cys-310–Cys-338, Cys-330–Cys-351, Cys-363–Cys-413, Cys-372–Cys-396, Cys-388–Cys-409, Cys-421–Cys-493, Cys-424–Cys-495, and Cys-435–Cys-544. Positions 112 to 163 constitute a Kazal-like domain; the sequence is WDGQPVCRCRDRCEKEPSFTCASDGLTYYNRCYMDAEACLRGLHLHVVPCKH. Positions 190–283 constitute an Ig-like C2-type domain; the sequence is PALYNSPSPQ…GLLRADFPLS (94 aa). BPTI/Kunitz inhibitor domains lie at 289–355 and 363–413; these read TTQD…QQAC and CALP…EDAC. The 132-residue stretch at 413-544 folds into the NTR domain; sequence CPVPRTPPCR…IVELLEKKAC (132 aa). A glycan (N-linked (GlcNAc...) asparagine) is linked at Asn-497.

This sequence belongs to the WFIKKN family.

The protein resides in the secreted. Its function is as follows. Protease-inhibitor that contains multiple distinct protease inhibitor domains. Probably has serine protease- and metalloprotease-inhibitor activity. The chain is WAP, Kazal, immunoglobulin, Kunitz and NTR domain-containing protein 1 (Wfikkn1) from Mus musculus (Mouse).